Here is a 213-residue protein sequence, read N- to C-terminus: Urease accessory protein UreG (213 aa).

14–21 serves as a coordination point for GTP; it reads GPVGSGKT.

The protein belongs to the SIMIBI class G3E GTPase family. UreG subfamily. Homodimer. UreD, UreF and UreG form a complex that acts as a GTP-hydrolysis-dependent molecular chaperone, activating the urease apoprotein by helping to assemble the nickel containing metallocenter of UreC. The UreE protein probably delivers the nickel.

It is found in the cytoplasm. Its function is as follows. Facilitates the functional incorporation of the urease nickel metallocenter. This process requires GTP hydrolysis, probably effectuated by UreG. This is Urease accessory protein UreG from Mesorhizobium japonicum (strain LMG 29417 / CECT 9101 / MAFF 303099) (Mesorhizobium loti (strain MAFF 303099)).